The following is a 244-amino-acid chain: 3-deoxy-manno-octulosonate cytidylyltransferase (244 aa).

The protein belongs to the KdsB family.

It localises to the cytoplasm. The enzyme catalyses 3-deoxy-alpha-D-manno-oct-2-ulosonate + CTP = CMP-3-deoxy-beta-D-manno-octulosonate + diphosphate. The protein operates within nucleotide-sugar biosynthesis; CMP-3-deoxy-D-manno-octulosonate biosynthesis; CMP-3-deoxy-D-manno-octulosonate from 3-deoxy-D-manno-octulosonate and CTP: step 1/1. Its pathway is bacterial outer membrane biogenesis; lipopolysaccharide biosynthesis. In terms of biological role, activates KDO (a required 8-carbon sugar) for incorporation into bacterial lipopolysaccharide in Gram-negative bacteria. The protein is 3-deoxy-manno-octulosonate cytidylyltransferase of Rickettsia canadensis (strain McKiel).